A 215-amino-acid chain; its full sequence is Ribosomal RNA small subunit methyltransferase G (215 aa).

S-adenosyl-L-methionine is bound by residues G71, L76, and R135.

Belongs to the methyltransferase superfamily. RNA methyltransferase RsmG family.

The protein localises to the cytoplasm. In terms of biological role, specifically methylates the N7 position of a guanine in 16S rRNA. The sequence is that of Ribosomal RNA small subunit methyltransferase G from Salinibacter ruber (strain DSM 13855 / M31).